The chain runs to 66 residues: Large ribosomal subunit protein eL24 (66 aa).

4 residues coordinate Zn(2+): Cys6, Cys9, Cys32, and Cys36. A C4-type zinc finger spans residues 6-36 (CSFCGKSIEPASGFLYVRKDGSVLNFCSRKC).

This sequence belongs to the eukaryotic ribosomal protein eL24 family. As to quaternary structure, part of the 50S ribosomal subunit. Forms a cluster with proteins L3 and L14. It depends on Zn(2+) as a cofactor.

In terms of biological role, binds to the 23S rRNA. This Picrophilus torridus (strain ATCC 700027 / DSM 9790 / JCM 10055 / NBRC 100828 / KAW 2/3) protein is Large ribosomal subunit protein eL24.